A 361-amino-acid chain; its full sequence is MLRATNNRRTSNNVEKDSLQMAKHGNGPLKPVNAQGLQTKREAREILALKPSNPAPVETAQKSQRINLQDAETKCLAMADDIYKYLVHHEKKYLLEECFMEGGEPTPKMRRILVDWLVQVHVRFHLTPETLHLTVFILDRMLQKKVTSKADLQLLGISAMFVASKFEEVYLPDIHDYEFITENTYSKKQILAMEQTILNSLNFDLSCPSSLVFLRCLSRILSENDASPIDNQAFCYTYNISKCLGELALLDSVMASTPRSHIASASMIIALEVHPVDGIEAENAVSVICKQLGASKKVIEDAVALLAEVSYKNFKQGKLVAIKNKYQSSKLAQVSNLMTDDVLEKINRMGQNAKVDASEME.

A compositionally biased stretch (polar residues) spans 1-13; it reads MLRATNNRRTSNN. Residues 1-33 form a disordered region; that stretch reads MLRATNNRRTSNNVEKDSLQMAKHGNGPLKPVN.

It belongs to the cyclin family. Cyclin AB subfamily. As to quaternary structure, interacts with the CDK1 protein kinase to form a serine/threonine kinase holoenzyme complex also known as maturation promoting factor (MPF). The cyclin subunit imparts substrate specificity to the complex. Interacts with E3 ubiquitin-protein ligase etc-1. Ubiquitinated by etc-1 likely during meiosis, resulting in its degradation.

The protein localises to the cytoplasm. Essential for the control of the cell cycle at the G2/M (mitosis) transition. The polypeptide is G2/mitotic-specific cyclin-B1 (cyb-1) (Caenorhabditis elegans).